A 410-amino-acid chain; its full sequence is MRRPQLLDRRWLTIILRSLRELIQRFDAHDGLKTASALTYTTLFAVVPFMTVLYAMLSAIPSFQGISEQLQALIFSQFVPATGSALVEHLRDFSRQARSLTLIGLMFLLVTAVMMMVTVERAFNNIWHVSRSRRGVSSFLLYWAVLTLGPLLLGSGFLLSSYLASLTLVRGAAEVLGGPVAFLRLLPLTLSFTAFVFIYMAVPNCRVRFRHAVAGAGLAALALELAKGAFSLYVTYFPSYQVIYGTFAAVPLFLVWVFLSWAIVLVGAELAAWLGERRRAEWRYWAPFWQALGVVSHLYDAHRRGQAVYDRELAMRLGARYSDVMAPLQTLGVAVQLDNDRWMLGRDLGALSLWDFQRAMPWAVPLGESSPAPEMQAIHAALQEAERHRQQVLTQPMEHLLAEGARNDSP.

Helical transmembrane passes span 43-63 (LFAVVPFMTVLYAMLSAIPSF), 99-119 (SLTLIGLMFLLVTAVMMMVTV), 139-159 (FLLYWAVLTLGPLLLGSGFLL), 180-200 (VAFLRLLPLTLSFTAFVFIYM), 212-232 (AVAGAGLAALALELAKGAFSL), and 247-267 (FAAVPLFLVWVFLSWAIVLVG).

It belongs to the UPF0761 family.

Its subcellular location is the cell inner membrane. The chain is UPF0761 membrane protein Csal_1895 from Chromohalobacter salexigens (strain ATCC BAA-138 / DSM 3043 / CIP 106854 / NCIMB 13768 / 1H11).